Here is a 695-residue protein sequence, read N- to C-terminus: Spermidine/spermine N(1)-acetyltransferase-like protein 1 (695 aa).

3 stretches are compositionally biased toward polar residues: residues 1–39, 52–68, and 78–98; these read MNQS…QGSA, PSMS…NLPD, and DTWQ…SQLV. 4 disordered regions span residues 1–274, 290–332, 344–375, and 387–493; these read MNQS…MNQM, DMKQ…PGMW, ASIS…NQSG, and RQSG…GLSQ. Positions 105–122 are enriched in low complexity; that stretch reads SQPDPSQPGPSQSGPSQS. Composition is skewed to polar residues over residues 123–179, 197–208, 231–266, 294–310, 355–375, 389–422, and 459–471; these read RMRQ…TGLS, GVQQPGISQQVP, PDTS…QPSP, PSMS…NLPD, APSQ…NQSG, SGGS…TGLS, and PGTS…QTGM. The N-acetyltransferase domain maps to 529–695; it reads FQIRHAEAGD…EELLDMAWEE (167 aa). A substrate-binding site is contributed by 552-553; it reads CE. Acetyl-CoA contacts are provided by residues 618–620 and 626–631; these read FYV and GLGIGA. Substrate is bound by residues 650–652 and E676; that span reads HFL.

It belongs to the acetyltransferase family.

This chain is Spermidine/spermine N(1)-acetyltransferase-like protein 1 (SATL1), found in Homo sapiens (Human).